Consider the following 155-residue polypeptide: Small ribosomal subunit protein uS7c (155 aa).

The protein belongs to the universal ribosomal protein uS7 family. In terms of assembly, part of the 30S ribosomal subunit.

Its subcellular location is the plastid. The protein resides in the chloroplast. Its function is as follows. One of the primary rRNA binding proteins, it binds directly to 16S rRNA where it nucleates assembly of the head domain of the 30S subunit. This Typha angustifolia (Narrow leaf cattail) protein is Small ribosomal subunit protein uS7c (rps7).